Here is a 167-residue protein sequence, read N- to C-terminus: Ureidoglycolate lyase (167 aa).

Belongs to the ureidoglycolate lyase family. Homodimer. It depends on Ni(2+) as a cofactor.

It catalyses the reaction (S)-ureidoglycolate = urea + glyoxylate. The protein operates within nitrogen metabolism; (S)-allantoin degradation. Its function is as follows. Catalyzes the catabolism of the allantoin degradation intermediate (S)-ureidoglycolate, generating urea and glyoxylate. Involved in the utilization of allantoin as nitrogen source. The sequence is that of Ureidoglycolate lyase from Pseudomonas entomophila (strain L48).